The chain runs to 100 residues: Small ribosomal subunit protein uS14c (100 aa).

The protein belongs to the universal ribosomal protein uS14 family. In terms of assembly, part of the 30S ribosomal subunit.

Its subcellular location is the plastid. The protein localises to the chloroplast. Binds 16S rRNA, required for the assembly of 30S particles. The chain is Small ribosomal subunit protein uS14c from Buxus microphylla (Littleleaf boxwood).